The sequence spans 200 residues: Small ribosomal subunit protein mS26 (200 aa).

A mitochondrion-targeting transit peptide spans 1–27 (MLRALNRLAARPETRPPTPLLLPVRGR). The disordered stretch occupies residues 1 to 44 (MLRALNRLAARPETRPPTPLLLPVRGRKTRHDPPAKSKVGRVQT). K159 carries the N6-acetyllysine modification.

It belongs to the mitochondrion-specific ribosomal protein mS26 family. As to quaternary structure, component of the mitochondrial ribosome small subunit (28S) which comprises a 12S rRNA and about 30 distinct proteins.

The protein resides in the mitochondrion. The protein is Small ribosomal subunit protein mS26 (Mrps26) of Mus musculus (Mouse).